We begin with the raw amino-acid sequence, 202 residues long: Pyridoxal 5'-phosphate synthase subunit PdxT (202 aa).

50 to 52 (GES) provides a ligand contact to L-glutamine. The active-site Nucleophile is the C82. L-glutamine contacts are provided by residues R111 and 140 to 141 (IR). Catalysis depends on charge relay system residues H176 and E178.

This sequence belongs to the glutaminase PdxT/SNO family. As to quaternary structure, in the presence of PdxS, forms a dodecamer of heterodimers. Only shows activity in the heterodimer.

The enzyme catalyses aldehydo-D-ribose 5-phosphate + D-glyceraldehyde 3-phosphate + L-glutamine = pyridoxal 5'-phosphate + L-glutamate + phosphate + 3 H2O + H(+). The catalysed reaction is L-glutamine + H2O = L-glutamate + NH4(+). Its pathway is cofactor biosynthesis; pyridoxal 5'-phosphate biosynthesis. Catalyzes the hydrolysis of glutamine to glutamate and ammonia as part of the biosynthesis of pyridoxal 5'-phosphate. The resulting ammonia molecule is channeled to the active site of PdxS. The protein is Pyridoxal 5'-phosphate synthase subunit PdxT of Streptomyces coelicolor (strain ATCC BAA-471 / A3(2) / M145).